Here is a 380-residue protein sequence, read N- to C-terminus: MAIEMLGLILAGGQGTRLGKLTKDVAKPAVPFGGRYRIIDFALSNCANSNVKNVGVITQYQPLTLNAHIGNGAPWGLNGINSGVTILQPYSSQEGSKWFEGTSHAVYQNISYIDQQNPEYVLILSGDHIYKMDYEAMLESHKEREASLTVSVMEVPLEEASRFGIMNTDDNDRIIEFEEKPKEPKSNLASMGIYIFNWKRLREVLVNGYSKGNPIEDFGGDVIPAYIEAGENVFAYRFKGYWKDVGTIDSLHQSSMEFLDLNNELNITDKSWRIYSHNDISAPQFITEKLKVKNALVGDGCYVDGTVIHSILSQNIHVQEGTTIEDSFIMSGTFIGENVTIKNAIIGENAKIGDNVEIIGEDEVAVIGHGEIKGENKNEQ.

Alpha-D-glucose 1-phosphate is bound by residues G164, 179–180 (EK), and S190.

The protein belongs to the bacterial/plant glucose-1-phosphate adenylyltransferase family. As to quaternary structure, homotetramer.

It catalyses the reaction alpha-D-glucose 1-phosphate + ATP + H(+) = ADP-alpha-D-glucose + diphosphate. The protein operates within glycan biosynthesis; glycogen biosynthesis. In terms of biological role, involved in the biosynthesis of ADP-glucose, a building block required for the elongation reactions to produce glycogen. Catalyzes the reaction between ATP and alpha-D-glucose 1-phosphate (G1P) to produce pyrophosphate and ADP-Glc. This Lactococcus lactis subsp. cremoris (strain SK11) protein is Glucose-1-phosphate adenylyltransferase.